A 708-amino-acid chain; its full sequence is Leucine-rich repeat neuronal protein 3 (708 aa).

The N-terminal stretch at 1-22 (MKDMPLQIHVLLGLAITTLVQA) is a signal peptide. Positions 23–69 (VDKKVDCPQLCTCEIRPWFTPTSIYMEASTVDCNDLGLLTFPARLPA) constitute an LRRNT domain. The Extracellular segment spans residues 23 to 628 (VDKKVDCPQL…KEYEKSNTTT (606 aa)). LRR repeat units follow at residues 70-91 (NTQILLLQTNDIAKIEYSTDFP), 93-114 (NLTGLDLSQNNLSSVTNINVKK), 117-138 (QLLSVYLEENKLTELPEKCLSE), 141-162 (NLQELYINHNLLSTISPGAFIG), 165-186 (NLLRLHLNSNRLQMINSKWFDA), 189-210 (NLEILMIGENPIIRIKDMNFKP), 213-234 (NLRSLVIAGINLTEIPDNALVG), 237-258 (NLESISFYDNRLIKVPHAALQK), 261-282 (NLKFLDLNKNPINRIRRGDFSN), 285-304 (HLKELGINNMPELISIDSLA), 310-332 (DLRKIEATNNPRLSYIHPNAFFR), and 335-358 (KLESLMLNSNALSALYHGTIESLP). Asparagine 93 and asparagine 103 each carry an N-linked (GlcNAc...) asparagine glycan. A glycan (N-linked (GlcNAc...) asparagine) is linked at asparagine 223. The LRRCT domain occupies 368–421 (NPIRCDCVIRWINMNKTNIRFMEPDSLFCVDPPEFQGQNVRQVHFRDMMEICLP). Asparagine 382 is a glycosylation site (N-linked (GlcNAc...) asparagine). An Ig-like C2-type domain is found at 421-514 (PLIAPESFPS…DLKSVMIKVD (94 aa)). Cysteine 444 and cysteine 496 are joined by a disulfide. Asparagine 522, asparagine 579, asparagine 608, and asparagine 625 each carry an N-linked (GlcNAc...) asparagine glycan. The 95-residue stretch at 523–617 (GSLNIKIRDI…NVTTKGLDPD (95 aa)) folds into the Fibronectin type-III domain. Residues 629 to 649 (LMACLGGLLGIIGVICLISCL) form a helical membrane-spanning segment. Residues 650–708 (SPEMNCDGGHSYVRNYLQKPTFALGELYPPLINLWEAGKEKSTSLKVKATVIGLPTNMS) are Cytoplasmic-facing.

It is found in the membrane. The sequence is that of Leucine-rich repeat neuronal protein 3 (LRRN3) from Pongo abelii (Sumatran orangutan).